A 144-amino-acid chain; its full sequence is Large ribosomal subunit protein uL16 (144 aa).

The protein belongs to the universal ribosomal protein uL16 family. In terms of assembly, part of the 50S ribosomal subunit.

Binds 23S rRNA and is also seen to make contacts with the A and possibly P site tRNAs. This chain is Large ribosomal subunit protein uL16, found in Lysinibacillus sphaericus (strain C3-41).